The chain runs to 154 residues: Transmembrane protein 35B (154 aa).

A signal peptide spans 1-22 (MALLLSVLRVLLGGFFALVGLA). 3 helical membrane-spanning segments follow: residues 63-83 (IAVG…PPML), 85-105 (EISN…LAAL), and 112-132 (CIPA…QLLA).

This sequence belongs to the DoxX family.

Its subcellular location is the membrane. The protein is Transmembrane protein 35B of Homo sapiens (Human).